A 259-amino-acid polypeptide reads, in one-letter code: uncharacterized protein (259 aa).

Helical transmembrane passes span 9-31, 84-106, 126-148, 153-175, 196-215, and 230-252; these read ILSV…LESL, LLGG…LQWF, FLIY…FVFG, SIVA…LEYV, HFIL…YIAA, and TFRA…SWLG.

Its subcellular location is the cell membrane. This is an uncharacterized protein from Archaeoglobus fulgidus (strain ATCC 49558 / DSM 4304 / JCM 9628 / NBRC 100126 / VC-16).